A 67-amino-acid polypeptide reads, in one-letter code: Small ribosomal subunit protein eS17 (67 aa).

This sequence belongs to the eukaryotic ribosomal protein eS17 family. Part of the 30S ribosomal subunit.

The sequence is that of Small ribosomal subunit protein eS17 from Thermococcus kodakarensis (strain ATCC BAA-918 / JCM 12380 / KOD1) (Pyrococcus kodakaraensis (strain KOD1)).